Reading from the N-terminus, the 137-residue chain is Gonadotropin subunit beta-1 (137 aa).

Residues 1–24 form the signal peptide; it reads MYCTHLMTLQLVVMAMLWVTPVRA. Intrachain disulfides connect C32–C78, C46–C93, C55–C108, C59–C110, and C113–C120. N-linked (GlcNAc...) asparagine glycosylation is present at N36.

This sequence belongs to the glycoprotein hormones subunit beta family. In terms of assembly, heterodimer of an alpha and a beta chain.

The protein resides in the secreted. Its function is as follows. Involved in gametogenesis and steroidogenesis. This chain is Gonadotropin subunit beta-1 (cgba), found in Oncorhynchus keta (Chum salmon).